The following is a 203-amino-acid chain: E3 ubiquitin-protein ligase RNF152 (203 aa).

Residues 12 to 55 (CQICFNYYSPRRRPKLLDCKHTCCSVCLQQMRTSQKDLRCPWCR) form an RING-type zinc finger. The chain crosses the membrane as a helical span at residues 167-187 (SGVCTVILVACVLVFLLGIVL).

Belongs to the RNF152 family.

It localises to the lysosome membrane. It catalyses the reaction S-ubiquitinyl-[E2 ubiquitin-conjugating enzyme]-L-cysteine + [acceptor protein]-L-lysine = [E2 ubiquitin-conjugating enzyme]-L-cysteine + N(6)-ubiquitinyl-[acceptor protein]-L-lysine.. It functions in the pathway protein modification; protein ubiquitination. Functionally, E3 ubiquitin-protein ligase that acts as a negative regulator of mTORC1 signaling by mediating ubiquitination of RagA/RRAGA and RHEB. Catalyzes 'Lys-63'-linked polyubiquitination of RagA/RRAGA in response to amino acid starvation, thereby regulating mTORC1 signaling. Also mediates monoubiquitination of RHEB, promoting its association with the TSC-TBC complex and subsequent inhibition. Also mediates 'Lys-48'-linked polyubiquitination of target proteins and their subsequent targeting to the proteasome for degradation. The protein is E3 ubiquitin-protein ligase RNF152 of Gallus gallus (Chicken).